Here is a 247-residue protein sequence, read N- to C-terminus: 5'-nucleotidase SurE (247 aa).

A divalent metal cation-binding residues include aspartate 8, aspartate 9, serine 39, and asparagine 91.

This sequence belongs to the SurE nucleotidase family. It depends on a divalent metal cation as a cofactor.

It localises to the cytoplasm. The enzyme catalyses a ribonucleoside 5'-phosphate + H2O = a ribonucleoside + phosphate. In terms of biological role, nucleotidase that shows phosphatase activity on nucleoside 5'-monophosphates. This Leptospira biflexa serovar Patoc (strain Patoc 1 / Ames) protein is 5'-nucleotidase SurE.